Reading from the N-terminus, the 62-residue chain is Short neurotoxin 2 (62 aa).

A disordered region spans residues 1 to 20 (MTCYNQQSSEAKTTTTCSGG). Disulfide bonds link Cys3–Cys24, Cys17–Cys41, Cys43–Cys54, and Cys55–Cys60.

The protein belongs to the three-finger toxin family. Short-chain subfamily. Type I alpha-neurotoxin sub-subfamily. In terms of tissue distribution, expressed by the venom gland.

The protein localises to the secreted. Its function is as follows. Binds to muscle nicotinic acetylcholine receptor (nAChR) and inhibit acetylcholine from binding to the receptor, thereby impairing neuromuscular transmission. The protein is Short neurotoxin 2 of Oxyuranus scutellatus scutellatus (Australian taipan).